Here is a 397-residue protein sequence, read N- to C-terminus: uncharacterized protein (397 aa).

The next 9 helical transmembrane spans lie at 1-21 (MGAS…LMLV), 39-59 (VIQS…VVVF), 76-96 (EALS…FGVP), 103-123 (VLLF…FVGA), 124-144 (ALIE…LVMA), 194-214 (MMTP…LFAF), 219-239 (ALFG…FSLL), 255-275 (LVYL…KLML), and 301-321 (QSLT…FWSA).

This sequence belongs to the TerC family.

It localises to the cell membrane. This is an uncharacterized protein from Mycobacterium bovis (strain ATCC BAA-935 / AF2122/97).